The primary structure comprises 67 residues: ATP synthase F(0) complex subunit 8 (67 aa).

The chain crosses the membrane as a helical span at residues 8-24 (TWFTVILSMIISLFMLL). K54 bears the N6-acetyllysine; alternate mark. An N6-succinyllysine; alternate modification is found at K54. Residue K57 is modified to N6-acetyllysine.

Belongs to the ATPase protein 8 family. In terms of assembly, component of the ATP synthase complex composed at least of ATP5F1A/subunit alpha, ATP5F1B/subunit beta, ATP5MC1/subunit c (homooctomer), MT-ATP6/subunit a, MT-ATP8/subunit 8, ATP5ME/subunit e, ATP5MF/subunit f, ATP5MG/subunit g, ATP5MK/subunit k, ATP5MJ/subunit j, ATP5F1C/subunit gamma, ATP5F1D/subunit delta, ATP5F1E/subunit epsilon, ATP5PF/subunit F6, ATP5PB/subunit b, ATP5PD/subunit d, ATP5PO/subunit OSCP. ATP synthase complex consists of a soluble F(1) head domain (subunits alpha(3) and beta(3)) - the catalytic core - and a membrane F(0) domain - the membrane proton channel (subunits c, a, 8, e, f, g, k and j). These two domains are linked by a central stalk (subunits gamma, delta, and epsilon) rotating inside the F1 region and a stationary peripheral stalk (subunits F6, b, d, and OSCP). Interacts with PRICKLE3.

The protein resides in the mitochondrion membrane. In terms of biological role, subunit 8, of the mitochondrial membrane ATP synthase complex (F(1)F(0) ATP synthase or Complex V) that produces ATP from ADP in the presence of a proton gradient across the membrane which is generated by electron transport complexes of the respiratory chain. ATP synthase complex consist of a soluble F(1) head domain - the catalytic core - and a membrane F(1) domain - the membrane proton channel. These two domains are linked by a central stalk rotating inside the F(1) region and a stationary peripheral stalk. During catalysis, ATP synthesis in the catalytic domain of F(1) is coupled via a rotary mechanism of the central stalk subunits to proton translocation. In vivo, can only synthesize ATP although its ATP hydrolase activity can be activated artificially in vitro. Part of the complex F(0) domain. The polypeptide is ATP synthase F(0) complex subunit 8 (Cavia porcellus (Guinea pig)).